The following is a 404-amino-acid chain: Mevalonate kinase (404 aa).

Residues lysine 12, serine 130, and 135 to 141 (GAGLGSS) each bind ATP. Serine 141 and glutamate 184 together coordinate Mg(2+). The active-site Proton acceptor is aspartate 195.

Belongs to the GHMP kinase family. Mevalonate kinase subfamily. Homodimer. Requires Mg(2+) as cofactor.

It localises to the cytoplasm. It is found in the nucleus. It carries out the reaction (R)-mevalonate + ATP = (R)-5-phosphomevalonate + ADP + H(+). Its pathway is isoprenoid biosynthesis; isopentenyl diphosphate biosynthesis via mevalonate pathway; isopentenyl diphosphate from (R)-mevalonate: step 1/3. Its activity is regulated as follows. Farnesyl pyrophosphate and geranyl pyrophosphate inhibit mevalonate kinase by binding competitively at the ATP-binding site. Functionally, mevalonate kinase; part of the second module of ergosterol biosynthesis pathway that includes the middle steps of the pathway. Erg12 converts mevalonate into 5-phosphomevalonate. The second module is carried out in the vacuole and involves the formation of farnesyl diphosphate, which is also an important intermediate in the biosynthesis of ubiquinone, dolichol, heme and prenylated proteins. Activity by the mevalonate kinase erg12 first converts mevalonate into 5-phosphomevalonate. 5-phosphomevalonate is then further converted to 5-diphosphomevalonate by the phosphomevalonate kinase erg8. The diphosphomevalonate decarboxylase mvd1 then produces isopentenyl diphosphate. The isopentenyl-diphosphate delta-isomerase idi1 then catalyzes the 1,3-allylic rearrangement of the homoallylic substrate isopentenyl (IPP) to its highly electrophilic allylic isomer, dimethylallyl diphosphate (DMAPP). Finally the farnesyl diphosphate synthase fps1 catalyzes the sequential condensation of isopentenyl pyrophosphate with dimethylallyl pyrophosphate, and then with the resultant geranylpyrophosphate to the ultimate product farnesyl pyrophosphate. The chain is Mevalonate kinase (erg12) from Schizosaccharomyces pombe (strain 972 / ATCC 24843) (Fission yeast).